The chain runs to 196 residues: Carnitine operon protein CaiE (196 aa).

The interval 173–196 (TQPLRQMEENRPRLQGTTDVTPKR) is disordered. Residues 187 to 196 (QGTTDVTPKR) show a composition bias toward polar residues.

It belongs to the transferase hexapeptide repeat family.

The protein operates within amine and polyamine metabolism; carnitine metabolism. Its function is as follows. Overproduction of CaiE stimulates the activity of CaiB and CaiD. In Escherichia coli O6:K15:H31 (strain 536 / UPEC), this protein is Carnitine operon protein CaiE.